A 475-amino-acid chain; its full sequence is MMQYSPKFNNAKVLVLGDVMLDRYWFGATNRISPEAPVPVVKVQDIEERAGGAANVAMNIASLSVPVALHGLIGQDDAGRALDKLLNSHNIQNHCVALDSHPTITKLRILSRHQQLLRLDFEEGFHHVASDSLLAKLEQEITAYGALILSDYGKGTLESVQQMIQVARKAGVPTLIDPKGTDFERYRGATLLTPNMSEFEAVVGHCKDDDEIVEKGLKLIADFELTALLVTRSEKGMTLLRPNQAPFHLPTQAKEVYDVTGAGDTVISVLATAIADGRPYEEACYLANAAAGVVVGKLGTSTVTPTELENAIHHREETGFGILAEDELKRAVEQAKQRGEKIVMTNGCFDILHPGHVSYLENARKLGDRLIVAVNTDESVKRLKGESRPINDLNARMAVLAGLASVDWVVPFAEDTPQRLIGEILPNLLVKGGDYKPEEIAGSQEVWANGGEVKVLNFENGCSTTNVIKKIQASK.

Positions 1–318 are ribokinase; sequence MMQYSPKFNN…ENAIHHREET (318 aa). ATP is bound at residue 195-198; sequence NMSE. Residue D264 is part of the active site. The tract at residues 344 to 475 is cytidylyltransferase; it reads MTNGCFDILH…NVIKKIQASK (132 aa).

It in the N-terminal section; belongs to the carbohydrate kinase PfkB family. This sequence in the C-terminal section; belongs to the cytidylyltransferase family. In terms of assembly, homodimer.

The catalysed reaction is D-glycero-beta-D-manno-heptose 7-phosphate + ATP = D-glycero-beta-D-manno-heptose 1,7-bisphosphate + ADP + H(+). The enzyme catalyses D-glycero-beta-D-manno-heptose 1-phosphate + ATP + H(+) = ADP-D-glycero-beta-D-manno-heptose + diphosphate. It participates in nucleotide-sugar biosynthesis; ADP-L-glycero-beta-D-manno-heptose biosynthesis; ADP-L-glycero-beta-D-manno-heptose from D-glycero-beta-D-manno-heptose 7-phosphate: step 1/4. It functions in the pathway nucleotide-sugar biosynthesis; ADP-L-glycero-beta-D-manno-heptose biosynthesis; ADP-L-glycero-beta-D-manno-heptose from D-glycero-beta-D-manno-heptose 7-phosphate: step 3/4. Its function is as follows. Catalyzes the phosphorylation of D-glycero-D-manno-heptose 7-phosphate at the C-1 position to selectively form D-glycero-beta-D-manno-heptose-1,7-bisphosphate. Functionally, catalyzes the ADP transfer from ATP to D-glycero-beta-D-manno-heptose 1-phosphate, yielding ADP-D-glycero-beta-D-manno-heptose. This Actinobacillus pleuropneumoniae serotype 5b (strain L20) protein is Bifunctional protein HldE.